The chain runs to 338 residues: Anthranilate phosphoribosyltransferase (338 aa).

5-phospho-alpha-D-ribose 1-diphosphate-binding positions include Gly78, 81-82 (GD), Ser86, 88-91 (NIST), 106-114 (KHGNKSITS), and Ser118. Gly78 is a binding site for anthranilate. A Mg(2+)-binding site is contributed by Ser90. Asn109 serves as a coordination point for anthranilate. Anthranilate is bound at residue Arg163. Positions 222 and 223 each coordinate Mg(2+).

This sequence belongs to the anthranilate phosphoribosyltransferase family. As to quaternary structure, homodimer. Requires Mg(2+) as cofactor.

The catalysed reaction is N-(5-phospho-beta-D-ribosyl)anthranilate + diphosphate = 5-phospho-alpha-D-ribose 1-diphosphate + anthranilate. The protein operates within amino-acid biosynthesis; L-tryptophan biosynthesis; L-tryptophan from chorismate: step 2/5. In terms of biological role, catalyzes the transfer of the phosphoribosyl group of 5-phosphorylribose-1-pyrophosphate (PRPP) to anthranilate to yield N-(5'-phosphoribosyl)-anthranilate (PRA). The protein is Anthranilate phosphoribosyltransferase of Staphylococcus carnosus (strain TM300).